Here is a 164-residue protein sequence, read N- to C-terminus: Cytochrome c-type biogenesis protein CcmE (164 aa).

The Cytoplasmic segment spans residues 1-8; sequence MNPRRKSR. A helical; Signal-anchor for type II membrane protein transmembrane segment spans residues 9–29; it reads LYLAIVVLIGVALTATLMLYA. Topologically, residues 30-164 are periplasmic; the sequence is LRSNIDLFYT…ATPQNEGAKS (135 aa). 2 residues coordinate heme: histidine 130 and tyrosine 134. Residues 131-148 are compositionally biased toward basic and acidic residues; that stretch reads DEKYTPPEVADAMKENHK. Positions 131-164 are disordered; it reads DEKYTPPEVADAMKENHKGPASAYATPQNEGAKS. Positions 155–164 are enriched in polar residues; it reads ATPQNEGAKS.

The protein belongs to the CcmE/CycJ family.

The protein localises to the cell inner membrane. Its function is as follows. Heme chaperone required for the biogenesis of c-type cytochromes. Transiently binds heme delivered by CcmC and transfers the heme to apo-cytochromes in a process facilitated by CcmF and CcmH. The polypeptide is Cytochrome c-type biogenesis protein CcmE (Serratia proteamaculans (strain 568)).